We begin with the raw amino-acid sequence, 409 residues long: Tyrosine--tRNA ligase (409 aa).

Residues 54-63 carry the 'HIGH' region motif; the sequence is PTAPDIHLGH. Residues 238–242 carry the 'KMSKS' region motif; the sequence is KMSKS. Lysine 241 contacts ATP. An S4 RNA-binding domain is found at 347–407; sequence QGILRILREA…GKRKFARVKL (61 aa).

This sequence belongs to the class-I aminoacyl-tRNA synthetase family. TyrS type 2 subfamily. In terms of assembly, homodimer.

The protein resides in the cytoplasm. It catalyses the reaction tRNA(Tyr) + L-tyrosine + ATP = L-tyrosyl-tRNA(Tyr) + AMP + diphosphate + H(+). In terms of biological role, catalyzes the attachment of tyrosine to tRNA(Tyr) in a two-step reaction: tyrosine is first activated by ATP to form Tyr-AMP and then transferred to the acceptor end of tRNA(Tyr). The polypeptide is Tyrosine--tRNA ligase (Bordetella bronchiseptica (strain ATCC BAA-588 / NCTC 13252 / RB50) (Alcaligenes bronchisepticus)).